We begin with the raw amino-acid sequence, 232 residues long: Probable ADP-ribosylation factor GTPase-activating protein AGD15 (232 aa).

In terms of domain architecture, Arf-GAP spans 16–130; it reads SKILEALLKH…RWVSPGAIQP (115 aa). A C4-type zinc finger spans residues 31–54; that stretch reads CADCRSKAPRWASVNLGIFICMQC. Residues 203-232 form a disordered region; sequence PNQKNENFSSEVNQNRRTTIAPPSSWATFD. Over residues 206 to 232 the composition is skewed to polar residues; that stretch reads KNENFSSEVNQNRRTTIAPPSSWATFD.

Functionally, GTPase-activating protein (GAP) for ADP ribosylation factor (ARF). The chain is Probable ADP-ribosylation factor GTPase-activating protein AGD15 (AGD15) from Arabidopsis thaliana (Mouse-ear cress).